A 687-amino-acid polypeptide reads, in one-letter code: Polyphosphate kinase (687 aa).

Asn45 provides a ligand contact to ATP. Mg(2+) contacts are provided by Arg375 and Arg405. His435 (phosphohistidine intermediate) is an active-site residue. 3 residues coordinate ATP: Tyr472, Arg568, and His596.

It belongs to the polyphosphate kinase 1 (PPK1) family. Mg(2+) serves as cofactor. Post-translationally, an intermediate of this reaction is the autophosphorylated ppk in which a phosphate is covalently linked to a histidine residue through a N-P bond.

The enzyme catalyses [phosphate](n) + ATP = [phosphate](n+1) + ADP. Its function is as follows. Catalyzes the reversible transfer of the terminal phosphate of ATP to form a long-chain polyphosphate (polyP). The sequence is that of Polyphosphate kinase from Burkholderia multivorans (strain ATCC 17616 / 249).